Here is a 447-residue protein sequence, read N- to C-terminus: Ribulose bisphosphate carboxylase large chain (447 aa).

Residue lysine 5 is modified to N6,N6,N6-trimethyllysine. Residues asparagine 114 and threonine 164 each contribute to the substrate site. Residue lysine 166 is the Proton acceptor of the active site. Lysine 168 provides a ligand contact to substrate. Residues lysine 192, aspartate 194, and glutamate 195 each coordinate Mg(2+). At lysine 192 the chain carries N6-carboxylysine. Catalysis depends on histidine 285, which acts as the Proton acceptor. The substrate site is built by arginine 286, histidine 318, and serine 370.

This sequence belongs to the RuBisCO large chain family. Type I subfamily. In terms of assembly, heterohexadecamer of 8 large chains and 8 small chains; disulfide-linked. The disulfide link is formed within the large subunit homodimers. It depends on Mg(2+) as a cofactor. Post-translationally, the disulfide bond which can form in the large chain dimeric partners within the hexadecamer appears to be associated with oxidative stress and protein turnover.

It is found in the plastid. It localises to the chloroplast. The enzyme catalyses 2 (2R)-3-phosphoglycerate + 2 H(+) = D-ribulose 1,5-bisphosphate + CO2 + H2O. It carries out the reaction D-ribulose 1,5-bisphosphate + O2 = 2-phosphoglycolate + (2R)-3-phosphoglycerate + 2 H(+). In terms of biological role, ruBisCO catalyzes two reactions: the carboxylation of D-ribulose 1,5-bisphosphate, the primary event in carbon dioxide fixation, as well as the oxidative fragmentation of the pentose substrate in the photorespiration process. Both reactions occur simultaneously and in competition at the same active site. This is Ribulose bisphosphate carboxylase large chain from Camassia leichtlinii (Western quamash).